The sequence spans 439 residues: ATP-dependent RNA helicase RhlB (439 aa).

The short motif at 9–37 (QKFADLPLHPEVKQALAENGFEFCTPIQA) is the Q motif element. Positions 40–219 (LPVLLQSKDI…YDHMNDPVKV (180 aa)) constitute a Helicase ATP-binding domain. 53–60 (AQTGTGKT) contributes to the ATP binding site. The DEAD box motif lies at 165-168 (DEAD). Residues 243 to 390 (KIRLLLTLIE…VSNYDRDALL (148 aa)) enclose the Helicase C-terminal domain. The tract at residues 395 to 439 (PPVKIHRKHPAGARNLRERSGAGRPQGAHRSGGRPPRHDRTRRQP) is disordered. Over residues 425 to 439 (SGGRPPRHDRTRRQP) the composition is skewed to basic residues.

Belongs to the DEAD box helicase family. RhlB subfamily. Component of the RNA degradosome, which is a multiprotein complex involved in RNA processing and mRNA degradation.

It localises to the cytoplasm. The enzyme catalyses ATP + H2O = ADP + phosphate + H(+). In terms of biological role, DEAD-box RNA helicase involved in RNA degradation. Has RNA-dependent ATPase activity and unwinds double-stranded RNA. The protein is ATP-dependent RNA helicase RhlB of Shewanella sp. (strain MR-4).